A 190-amino-acid chain; its full sequence is dCTP deaminase (190 aa).

Position 113 to 118 (113 to 118 (KSTYAR)) interacts with dCTP. Glu-139 (proton donor/acceptor) is an active-site residue. DCTP contacts are provided by Gln-158, Tyr-172, Lys-181, and Gln-182.

Belongs to the dCTP deaminase family. In terms of assembly, homotrimer.

The enzyme catalyses dCTP + H2O + H(+) = dUTP + NH4(+). Its pathway is pyrimidine metabolism; dUMP biosynthesis; dUMP from dCTP (dUTP route): step 1/2. In terms of biological role, catalyzes the deamination of dCTP to dUTP. The chain is dCTP deaminase from Chlamydia abortus (strain DSM 27085 / S26/3) (Chlamydophila abortus).